The primary structure comprises 315 residues: Holliday junction branch migration complex subunit RuvB (315 aa).

Positions 1–168 (MAKKQEIRPK…FGLIGQISNY (168 aa)) are large ATPase domain (RuvB-L). Residues Ile7, Arg8, Gly49, Lys52, Thr53, Ser54, 115-117 (EDF), Arg158, Tyr168, and Arg205 contribute to the ATP site. Thr53 provides a ligand contact to Mg(2+). Residues 169–239 (QVEDIEKIIK…LVNKTLKQLG (71 aa)) are small ATPAse domain (RuvB-S). The segment at 242 to 315 (ENGLNESQVK…QKGISYLERI (74 aa)) is head domain (RuvB-H). DNA is bound by residues Lys297 and Arg302.

This sequence belongs to the RuvB family. Homohexamer. Forms an RuvA(8)-RuvB(12)-Holliday junction (HJ) complex. HJ DNA is sandwiched between 2 RuvA tetramers; dsDNA enters through RuvA and exits via RuvB. An RuvB hexamer assembles on each DNA strand where it exits the tetramer. Each RuvB hexamer is contacted by two RuvA subunits (via domain III) on 2 adjacent RuvB subunits; this complex drives branch migration. In the full resolvosome a probable DNA-RuvA(4)-RuvB(12)-RuvC(2) complex forms which resolves the HJ.

The protein resides in the cytoplasm. The catalysed reaction is ATP + H2O = ADP + phosphate + H(+). In terms of biological role, the RuvA-RuvB-RuvC complex processes Holliday junction (HJ) DNA during genetic recombination and DNA repair, while the RuvA-RuvB complex plays an important role in the rescue of blocked DNA replication forks via replication fork reversal (RFR). RuvA specifically binds to HJ cruciform DNA, conferring on it an open structure. The RuvB hexamer acts as an ATP-dependent pump, pulling dsDNA into and through the RuvAB complex. RuvB forms 2 homohexamers on either side of HJ DNA bound by 1 or 2 RuvA tetramers; 4 subunits per hexamer contact DNA at a time. Coordinated motions by a converter formed by DNA-disengaged RuvB subunits stimulates ATP hydrolysis and nucleotide exchange. Immobilization of the converter enables RuvB to convert the ATP-contained energy into a lever motion, pulling 2 nucleotides of DNA out of the RuvA tetramer per ATP hydrolyzed, thus driving DNA branch migration. The RuvB motors rotate together with the DNA substrate, which together with the progressing nucleotide cycle form the mechanistic basis for DNA recombination by continuous HJ branch migration. Branch migration allows RuvC to scan DNA until it finds its consensus sequence, where it cleaves and resolves cruciform DNA. The protein is Holliday junction branch migration complex subunit RuvB of Mycoplasmopsis pulmonis (strain UAB CTIP) (Mycoplasma pulmonis).